The primary structure comprises 1241 residues: ATP-dependent helicase/nuclease subunit A (1241 aa).

One can recognise a UvrD-like helicase ATP-binding domain in the interval 12 to 485 (SQWTDDQWKA…IDLAKNFRSR (474 aa)). 33-40 (AAAGSGKT) lines the ATP pocket. The region spanning 505–805 (GEIDYDADAE…RIMTIHKSKG (301 aa)) is the UvrD-like helicase C-terminal domain.

It belongs to the helicase family. AddA subfamily. As to quaternary structure, heterodimer of AddA and AddB/RexB. It depends on Mg(2+) as a cofactor.

It catalyses the reaction Couples ATP hydrolysis with the unwinding of duplex DNA by translocating in the 3'-5' direction.. It carries out the reaction ATP + H2O = ADP + phosphate + H(+). The heterodimer acts as both an ATP-dependent DNA helicase and an ATP-dependent, dual-direction single-stranded exonuclease. Recognizes the chi site generating a DNA molecule suitable for the initiation of homologous recombination. The AddA nuclease domain is required for chi fragment generation; this subunit has the helicase and 3' -&gt; 5' nuclease activities. The protein is ATP-dependent helicase/nuclease subunit A of Bacillus anthracis.